Consider the following 181-residue polypeptide: NAD(P)H-quinone oxidoreductase subunit I, chloroplastic (181 aa).

2 4Fe-4S ferredoxin-type domains span residues 52 to 81 (GRIH…VDWE) and 92 to 121 (KSYS…MTEE). [4Fe-4S] cluster-binding residues include Cys-61, Cys-64, Cys-67, Cys-71, Cys-101, Cys-104, Cys-107, and Cys-111.

It belongs to the complex I 23 kDa subunit family. NDH is composed of at least 16 different subunits, 5 of which are encoded in the nucleus. The cofactor is [4Fe-4S] cluster.

The protein resides in the plastid. Its subcellular location is the chloroplast thylakoid membrane. It catalyses the reaction a plastoquinone + NADH + (n+1) H(+)(in) = a plastoquinol + NAD(+) + n H(+)(out). It carries out the reaction a plastoquinone + NADPH + (n+1) H(+)(in) = a plastoquinol + NADP(+) + n H(+)(out). In terms of biological role, NDH shuttles electrons from NAD(P)H:plastoquinone, via FMN and iron-sulfur (Fe-S) centers, to quinones in the photosynthetic chain and possibly in a chloroplast respiratory chain. The immediate electron acceptor for the enzyme in this species is believed to be plastoquinone. Couples the redox reaction to proton translocation, and thus conserves the redox energy in a proton gradient. The polypeptide is NAD(P)H-quinone oxidoreductase subunit I, chloroplastic (Staurastrum punctulatum (Green alga)).